Reading from the N-terminus, the 948-residue chain is UvrABC system protein A (948 aa).

42 to 49 (GLSGSGKS) contacts ATP. A C4-type zinc finger spans residues 262-289 (CPVCSYSLPELEPRLFSFNNPMGSCPTC). ABC transporter domains are found at residues 319 to 596 (WDKR…ENSV) and 616 to 945 (VNPG…KYLK). Position 649–656 (649–656 (GVSGSGKS)) interacts with ATP. The C4-type zinc finger occupies 748–774 (CEACQGDGVIKVEMHFLPDVYVPCEVC).

The protein belongs to the ABC transporter superfamily. UvrA family. Forms a heterotetramer with UvrB during the search for lesions.

It localises to the cytoplasm. Its function is as follows. The UvrABC repair system catalyzes the recognition and processing of DNA lesions. UvrA is an ATPase and a DNA-binding protein. A damage recognition complex composed of 2 UvrA and 2 UvrB subunits scans DNA for abnormalities. When the presence of a lesion has been verified by UvrB, the UvrA molecules dissociate. This Neisseria meningitidis serogroup A / serotype 4A (strain DSM 15465 / Z2491) protein is UvrABC system protein A.